A 121-amino-acid polypeptide reads, in one-letter code: Small ribosomal subunit protein uS13 (121 aa).

The tract at residues 97 to 121 is disordered; that stretch reads VRGQRTRTNARTRRGARKTVAGRKK. Over residues 100 to 121 the composition is skewed to basic residues; sequence QRTRTNARTRRGARKTVAGRKK.

Belongs to the universal ribosomal protein uS13 family. As to quaternary structure, part of the 30S ribosomal subunit. Forms a loose heterodimer with protein S19. Forms two bridges to the 50S subunit in the 70S ribosome.

In terms of biological role, located at the top of the head of the 30S subunit, it contacts several helices of the 16S rRNA. In the 70S ribosome it contacts the 23S rRNA (bridge B1a) and protein L5 of the 50S subunit (bridge B1b), connecting the 2 subunits; these bridges are implicated in subunit movement. Contacts the tRNAs in the A and P-sites. This is Small ribosomal subunit protein uS13 from Prochlorococcus marinus (strain NATL1A).